Here is a 421-residue protein sequence, read N- to C-terminus: Alpha-tubulin N-acetyltransferase 1 (421 aa).

The N-acetyltransferase domain maps to 1–190; that stretch reads MEFPFDVDAL…NNFVIFEGFF (190 aa). Lysine 56 carries the N6-acetyllysine; by autocatalysis modification. Position 124 to 137 (124 to 137) interacts with acetyl-CoA; it reads FYIHESVQRHGHGR. N6-acetyllysine; by autocatalysis is present on lysine 146. 160–169 contacts acetyl-CoA; sequence SPKLLKFLNK. Positions 214–235 are disordered; that stretch reads PIPAAPARKLPPKRAEGDIKPY. The span at 226–235 shows a compositional bias: basic and acidic residues; the sequence is KRAEGDIKPY. Lysine 233 and lysine 244 each carry N6-acetyllysine; by autocatalysis. A disordered region spans residues 252-284; that stretch reads PLNRAPRRATPPAHPPPRSSSLGNSPDRGPLRP. Serine 272 and serine 276 each carry phosphoserine. Arginine 305 bears the Asymmetric dimethylarginine mark. The residue at position 315 (serine 315) is a Phosphoserine. Arginine 323 bears the Omega-N-methylarginine mark. The segment covering 342–351 has biased composition (polar residues); it reads FNTSFLGTGN. Positions 342-398 are disordered; it reads FNTSFLGTGNQERKQGEQEAEDRSASEDQVLLQDGSGEEPTHTVAPRAQAPPAQSWM. Over residues 352–367 the composition is skewed to basic and acidic residues; the sequence is QERKQGEQEAEDRSAS.

The protein belongs to the acetyltransferase ATAT1 family. Component of the BBSome complex. Interacts with AP2 alpha-adaptins, including AP2A2, but not with AP1 gamma-adaptin (AP1G1/AP1G2); this interaction is required for efficient alpha-tubulin acetylation, hence clathrin-coated pits are sites of microtubule acetylation. Post-translationally, autoacetylation strongly increases tubulin acetylation.

Its subcellular location is the cytoplasm. It localises to the membrane. The protein resides in the clathrin-coated pit. It is found in the cell junction. The protein localises to the focal adhesion. Its subcellular location is the cell projection. It localises to the axon. The protein resides in the cytoskeleton. It is found in the spindle. The catalysed reaction is L-lysyl-[alpha-tubulin] + acetyl-CoA = N(6)-acetyl-L-lysyl-[alpha-tubulin] + CoA + H(+). In terms of biological role, specifically acetylates 'Lys-40' in alpha-tubulin on the lumenal side of microtubules. Promotes microtubule destabilization and accelerates microtubule dynamics; this activity may be independent of acetylation activity. Acetylates alpha-tubulin with a slow enzymatic rate, due to a catalytic site that is not optimized for acetyl transfer. Enters the microtubule through each end and diffuses quickly throughout the lumen of microtubules. Acetylates only long/old microtubules because of its slow acetylation rate since it does not have time to act on dynamically unstable microtubules before the enzyme is released. Required for normal sperm flagellar function. Promotes directional cell locomotion and chemotaxis, through AP2A2-dependent acetylation of alpha-tubulin at clathrin-coated pits that are concentrated at the leading edge of migrating cells. May facilitate primary cilium assembly. The sequence is that of Alpha-tubulin N-acetyltransferase 1 from Rattus norvegicus (Rat).